We begin with the raw amino-acid sequence, 351 residues long: Putative glycosyltransferase 45 (351 aa).

The protein belongs to the glycosyltransferase group 1 family.

The sequence is that of Putative glycosyltransferase 45 (SIFV0045) from Sulfolobus islandicus filamentous virus (isolate Iceland/Hveragerdi) (SIFV).